Here is a 221-residue protein sequence, read N- to C-terminus: MVSSSVSSVTEVKVESYVFPPSVKPPSSTKSFLLGGAGVRGLEINGNFVKFTAIGVYLEESGVAVLSGKWKGKTAEELSDSVEFFTDIITGPFEKFTQVTLILPVTGQQYSPKVAENCAAQWKAAGIYTDADGIAIEKFLQVFQTESFTPGDSILFTHSPESLTISFGKNGAIPEVSNAVIENKKLSEAVIESIIGEKGVSPAAKKSLATRIAEILNHFDA.

3 residues coordinate substrate: threonine 52, asparagine 117, and serine 193.

Belongs to the chalcone isomerase family. In terms of tissue distribution, flowers.

It catalyses the reaction a chalcone = a flavanone.. It functions in the pathway secondary metabolite biosynthesis; flavonoid biosynthesis. Catalyzes the intramolecular cyclization of bicyclic chalcones into tricyclic (S)-flavanones. Responsible for the isomerization of 4,2',4',6'-tetrahydroxychalcone (also termed chalcone) into naringenin. This chain is Chalcone--flavanone isomerase (CHI), found in Gentiana triflora (Clustered gentian).